The primary structure comprises 187 residues: Ribosome-recycling factor (187 aa).

The protein belongs to the RRF family.

The protein resides in the cytoplasm. Functionally, responsible for the release of ribosomes from messenger RNA at the termination of protein biosynthesis. May increase the efficiency of translation by recycling ribosomes from one round of translation to another. This Orientia tsutsugamushi (strain Boryong) (Rickettsia tsutsugamushi) protein is Ribosome-recycling factor.